The chain runs to 395 residues: Dual specificity protein phosphatase 4 (395 aa).

Val-2 carries the post-translational modification N-acetylvaline. The region spanning 42–160 is the Rhodanese domain; the sequence is SGGKCLLLDC…FSSEYPEFCS (119 aa). Positions 196-337 constitute a Tyrosine-protein phosphatase domain; that stretch reads GPVEILPFLY…LLQFESQVLT (142 aa). Cys-281 serves as the catalytic Phosphocysteine intermediate. Phosphoserine; by MAPK occurs at positions 387 and 392.

The protein belongs to the protein-tyrosine phosphatase family. Non-receptor class dual specificity subfamily. Hollow spherical complex composed of 24 subunits with pseudooctahedral symmetry, has a tetramer as the basic unit. Phosphorylation in the C-terminus by ERK1/2 inhibits proteasomal degradation and stabilizes the protein. As to expression, expressed at moderate levels in nearly all tissues and cells including brain, spleen, and testes with the higher expression in the heart and lung and lower expression in skeletal muscle and kidney. Undetectable in liver. Expressed in many areas of the brain with very strong expression in the hippocampus, piriform cortex, and the suprachiasmatic nucleus.

The protein localises to the nucleus. It catalyses the reaction O-phospho-L-tyrosyl-[protein] + H2O = L-tyrosyl-[protein] + phosphate. The enzyme catalyses O-phospho-L-seryl-[protein] + H2O = L-seryl-[protein] + phosphate. The catalysed reaction is O-phospho-L-threonyl-[protein] + H2O = L-threonyl-[protein] + phosphate. Regulates mitogenic signal transduction by dephosphorylating both Thr and Tyr residues on MAP kinases ERK1 and ERK2. This is Dual specificity protein phosphatase 4 (Dusp4) from Rattus norvegicus (Rat).